A 182-amino-acid polypeptide reads, in one-letter code: NADH-quinone oxidoreductase subunit C 2 (182 aa).

Residues 153 to 182 (YKDKLNPFGAEGPPPTQPDLATNDIPQGGR) are disordered.

Belongs to the complex I 30 kDa subunit family. As to quaternary structure, NDH-1 is composed of 14 different subunits. Subunits NuoB, C, D, E, F, and G constitute the peripheral sector of the complex.

It localises to the cell inner membrane. It catalyses the reaction a quinone + NADH + 5 H(+)(in) = a quinol + NAD(+) + 4 H(+)(out). Its function is as follows. NDH-1 shuttles electrons from NADH, via FMN and iron-sulfur (Fe-S) centers, to quinones in the respiratory chain. The immediate electron acceptor for the enzyme in this species is believed to be ubiquinone. Couples the redox reaction to proton translocation (for every two electrons transferred, four hydrogen ions are translocated across the cytoplasmic membrane), and thus conserves the redox energy in a proton gradient. The protein is NADH-quinone oxidoreductase subunit C 2 of Rhizobium meliloti (strain 1021) (Ensifer meliloti).